The primary structure comprises 325 residues: Tetraacyldisaccharide 4'-kinase (325 aa).

An ATP-binding site is contributed by 58–65 (TVGGSGKT).

Belongs to the LpxK family.

It carries out the reaction a lipid A disaccharide + ATP = a lipid IVA + ADP + H(+). It participates in glycolipid biosynthesis; lipid IV(A) biosynthesis; lipid IV(A) from (3R)-3-hydroxytetradecanoyl-[acyl-carrier-protein] and UDP-N-acetyl-alpha-D-glucosamine: step 6/6. Functionally, transfers the gamma-phosphate of ATP to the 4'-position of a tetraacyldisaccharide 1-phosphate intermediate (termed DS-1-P) to form tetraacyldisaccharide 1,4'-bis-phosphate (lipid IVA). The sequence is that of Tetraacyldisaccharide 4'-kinase from Coxiella burnetii (strain CbuG_Q212) (Coxiella burnetii (strain Q212)).